We begin with the raw amino-acid sequence, 385 residues long: Centrosomal protein of 44 kDa (385 aa).

A binds with microtubules and centrioles region spans residues 11 to 191 (RKLEQRLRTL…TKCYKSALLE (181 aa)). The segment covering 194–204 (EEEEPTSDCEE) has biased composition (acidic residues). The tract at residues 194–224 (EEEEPTSDCEEDSHLQREMGSPFETAEETPN) is disordered. 2 coiled-coil regions span residues 224 to 263 (NSEQ…KGKI) and 353 to 379 (TEES…ELLK).

As to quaternary structure, binds to centriolar microtubules.

The protein resides in the cytoplasm. It is found in the cytoskeleton. Its subcellular location is the microtubule organizing center. The protein localises to the centrosome. It localises to the centriole. The protein resides in the spindle pole. It is found in the midbody. In terms of biological role, centriole-enriched microtubule-binding protein involved in centriole biogenesis. In collaboration with CEP295 and POC1B, is required for the centriole-to-centrosome conversion by ensuring the formation of bona fide centriole wall. Functions as a linker component that maintains centrosome cohesion. Associates with CROCC and regulates its stability and localization to the centrosome. The sequence is that of Centrosomal protein of 44 kDa (cep44) from Xenopus tropicalis (Western clawed frog).